Reading from the N-terminus, the 360-residue chain is Phospho-N-acetylmuramoyl-pentapeptide-transferase (360 aa).

10 consecutive transmembrane segments (helical) span residues Y21 to G41, T73 to L93, T94 to V114, W132 to G152, V168 to S188, G199 to T219, L239 to Y259, V263 to L283, F288 to V308, and V338 to K358.

Belongs to the glycosyltransferase 4 family. MraY subfamily. The cofactor is Mg(2+).

It is found in the cell inner membrane. The enzyme catalyses UDP-N-acetyl-alpha-D-muramoyl-L-alanyl-gamma-D-glutamyl-meso-2,6-diaminopimeloyl-D-alanyl-D-alanine + di-trans,octa-cis-undecaprenyl phosphate = di-trans,octa-cis-undecaprenyl diphospho-N-acetyl-alpha-D-muramoyl-L-alanyl-D-glutamyl-meso-2,6-diaminopimeloyl-D-alanyl-D-alanine + UMP. Its pathway is cell wall biogenesis; peptidoglycan biosynthesis. Its function is as follows. Catalyzes the initial step of the lipid cycle reactions in the biosynthesis of the cell wall peptidoglycan: transfers peptidoglycan precursor phospho-MurNAc-pentapeptide from UDP-MurNAc-pentapeptide onto the lipid carrier undecaprenyl phosphate, yielding undecaprenyl-pyrophosphoryl-MurNAc-pentapeptide, known as lipid I. This is Phospho-N-acetylmuramoyl-pentapeptide-transferase from Vibrio cholerae serotype O1 (strain ATCC 39541 / Classical Ogawa 395 / O395).